Reading from the N-terminus, the 93-residue chain is Acylphosphatase (93 aa).

The Acylphosphatase-like domain maps to 6–92 (RAHVWVGGKV…EGLTHFEVLR (87 aa)). Catalysis depends on residues Arg21 and Asn39.

The protein belongs to the acylphosphatase family.

It carries out the reaction an acyl phosphate + H2O = a carboxylate + phosphate + H(+). This Gloeobacter violaceus (strain ATCC 29082 / PCC 7421) protein is Acylphosphatase (acyP).